We begin with the raw amino-acid sequence, 111 residues long: Probable 4-amino-4-deoxy-L-arabinose-phosphoundecaprenol flippase subunit ArnE (111 aa).

A run of 3 helical transmembrane segments spans residues I36–L56, V61–A81, and P88–G108. The EamA domain occupies L40 to S109.

Belongs to the ArnE family. In terms of assembly, heterodimer of ArnE and ArnF.

It localises to the cell inner membrane. Its pathway is bacterial outer membrane biogenesis; lipopolysaccharide biosynthesis. Its function is as follows. Translocates 4-amino-4-deoxy-L-arabinose-phosphoundecaprenol (alpha-L-Ara4N-phosphoundecaprenol) from the cytoplasmic to the periplasmic side of the inner membrane. This is Probable 4-amino-4-deoxy-L-arabinose-phosphoundecaprenol flippase subunit ArnE from Shigella flexneri.